The sequence spans 237 residues: Sensory rhodopsin-2 (237 aa).

The Extracellular segment spans residues 1–2; sequence MA. The chain crosses the membrane as a helical span at residues 3-23; sequence LTTWFWVGAVGMLAGTVLPIR. At 24–31 the chain is on the cytoplasmic side; the sequence is DCIRHPSH. Residues 32-53 form a helical membrane-spanning segment; that stretch reads RRYDLVLAGITGLAAIAYTTMG. At 54–67 the chain is on the extracellular side; sequence LGITATTVGDRTVY. Residues 68–89 traverse the membrane as a helical segment; it reads LARYIDWLVTTPLIVLYLAMLA. The Cytoplasmic segment spans residues 90–92; sequence RPG. The helical transmembrane segment at 93 to 115 threads the bilayer; that stretch reads HRTSAWLLAADVFVIAAGIAAAL. Over 116 to 119 the chain is Extracellular; it reads TTGV. The helical transmembrane segment at 120-147 threads the bilayer; it reads QRWLFFAVGAAGYAALLYGLLGTLPRAL. Topologically, residues 148–150 are cytoplasmic; sequence GDD. A helical transmembrane segment spans residues 151–178; it reads PRVRSLFVTLRNITVVLWTLYPVVWLLS. At 179 to 186 the chain is on the extracellular side; sequence PAGIGILQ. The chain crosses the membrane as a helical span at residues 187 to 214; the sequence is TEMYTIVVVYLDFISKVAFVAFAVLGAD. Position 202 is an N6-(retinylidene)lysine (K202). Over 215-237 the chain is Cytoplasmic; the sequence is AVSRLVAADAAAPATAEPTPDGD.

This sequence belongs to the archaeal/bacterial/fungal opsin family. In terms of assembly, interacts with HTR-II.

It localises to the cell membrane. Functionally, photophobic photoreceptor responsible for the negative phototaxis. Activates the sensory rhodopsin II transducer (HTR-II) in response to blue light. The sequence is that of Sensory rhodopsin-2 (sop2) from Halobacterium salinarum (strain ATCC 700922 / JCM 11081 / NRC-1) (Halobacterium halobium).